We begin with the raw amino-acid sequence, 433 residues long: Serine--tRNA ligase (433 aa).

An L-serine-binding site is contributed by 235 to 237 (TSE). 266–268 (RSE) contributes to the ATP binding site. Glu289 provides a ligand contact to L-serine. 353 to 356 (EISS) is a binding site for ATP. Ser388 contributes to the L-serine binding site.

It belongs to the class-II aminoacyl-tRNA synthetase family. Type-1 seryl-tRNA synthetase subfamily. Homodimer. The tRNA molecule binds across the dimer.

The protein localises to the cytoplasm. It catalyses the reaction tRNA(Ser) + L-serine + ATP = L-seryl-tRNA(Ser) + AMP + diphosphate + H(+). The catalysed reaction is tRNA(Sec) + L-serine + ATP = L-seryl-tRNA(Sec) + AMP + diphosphate + H(+). Its pathway is aminoacyl-tRNA biosynthesis; selenocysteinyl-tRNA(Sec) biosynthesis; L-seryl-tRNA(Sec) from L-serine and tRNA(Sec): step 1/1. Catalyzes the attachment of serine to tRNA(Ser). Is also able to aminoacylate tRNA(Sec) with serine, to form the misacylated tRNA L-seryl-tRNA(Sec), which will be further converted into selenocysteinyl-tRNA(Sec). The chain is Serine--tRNA ligase from Burkholderia thailandensis (strain ATCC 700388 / DSM 13276 / CCUG 48851 / CIP 106301 / E264).